The primary structure comprises 945 residues: Bifunctional glutamine synthetase adenylyltransferase/adenylyl-removing enzyme (945 aa).

An adenylyl removase region spans residues 1–440 (MMPLSPQLQQ…VFNELIGDDE (440 aa)). Residues 449–945 (AEYWRELWQD…SASWQKWLMA (497 aa)) are adenylyl transferase.

This sequence belongs to the GlnE family. The cofactor is Mg(2+).

The catalysed reaction is [glutamine synthetase]-O(4)-(5'-adenylyl)-L-tyrosine + phosphate = [glutamine synthetase]-L-tyrosine + ADP. It carries out the reaction [glutamine synthetase]-L-tyrosine + ATP = [glutamine synthetase]-O(4)-(5'-adenylyl)-L-tyrosine + diphosphate. Its function is as follows. Involved in the regulation of glutamine synthetase GlnA, a key enzyme in the process to assimilate ammonia. When cellular nitrogen levels are high, the C-terminal adenylyl transferase (AT) inactivates GlnA by covalent transfer of an adenylyl group from ATP to specific tyrosine residue of GlnA, thus reducing its activity. Conversely, when nitrogen levels are low, the N-terminal adenylyl removase (AR) activates GlnA by removing the adenylyl group by phosphorolysis, increasing its activity. The regulatory region of GlnE binds the signal transduction protein PII (GlnB) which indicates the nitrogen status of the cell. This chain is Bifunctional glutamine synthetase adenylyltransferase/adenylyl-removing enzyme, found in Klebsiella pneumoniae subsp. pneumoniae (strain ATCC 700721 / MGH 78578).